We begin with the raw amino-acid sequence, 1465 residues long: DNA polymerase III PolC-type (1465 aa).

Positions 427 to 583 (YVVFDVETTG…YDAEATGRLL (157 aa)) constitute an Exonuclease domain.

It belongs to the DNA polymerase type-C family. PolC subfamily.

It localises to the cytoplasm. The enzyme catalyses DNA(n) + a 2'-deoxyribonucleoside 5'-triphosphate = DNA(n+1) + diphosphate. Its function is as follows. Required for replicative DNA synthesis. This DNA polymerase also exhibits 3' to 5' exonuclease activity. The chain is DNA polymerase III PolC-type from Streptococcus pyogenes serotype M12 (strain MGAS2096).